Here is a 749-residue protein sequence, read N- to C-terminus: NAD(P)H-quinone oxidoreductase subunit 5, chloroplastic (749 aa).

Helical transmembrane passes span 9–29 (WIIP…LLLF), 40–60 (WSFT…NLSI), 89–109 (IDPL…MVLI), 125–145 (FAYM…SNLI), 147–167 (IYIF…FWFT), 185–205 (GDFG…SFEF), 221–241 (NGTN…GAVA), 260–280 (TPIS…FLVA), 285–305 (LFIV…ITIL), 329–349 (LGYT…FHLI), 356–376 (ALLF…VGYS), 398–418 (NTFL…CFWS), 427–447 (WLYS…TAFY), 553–573 (LFPL…GIPF), 607–627 (FVIN…LASL), and 727–747 (SYLF…YFFL).

This sequence belongs to the complex I subunit 5 family. In terms of assembly, NDH is composed of at least 16 different subunits, 5 of which are encoded in the nucleus.

The protein resides in the plastid. It localises to the chloroplast thylakoid membrane. It carries out the reaction a plastoquinone + NADH + (n+1) H(+)(in) = a plastoquinol + NAD(+) + n H(+)(out). The enzyme catalyses a plastoquinone + NADPH + (n+1) H(+)(in) = a plastoquinol + NADP(+) + n H(+)(out). Its function is as follows. NDH shuttles electrons from NAD(P)H:plastoquinone, via FMN and iron-sulfur (Fe-S) centers, to quinones in the photosynthetic chain and possibly in a chloroplast respiratory chain. The immediate electron acceptor for the enzyme in this species is believed to be plastoquinone. Couples the redox reaction to proton translocation, and thus conserves the redox energy in a proton gradient. The polypeptide is NAD(P)H-quinone oxidoreductase subunit 5, chloroplastic (ndhF) (Vitis vinifera (Grape)).